The chain runs to 396 residues: S-adenosylmethionine synthase (396 aa).

Histidine 16 contacts ATP. Residue aspartate 18 participates in Mg(2+) binding. Glutamate 44 serves as a coordination point for K(+). Residues glutamate 57 and glutamine 100 each coordinate L-methionine. Residues 100–110 are flexible loop; sequence QSPDINQGVDR. Residues 165–167, 231–232, aspartate 240, 246–247, alanine 263, and lysine 267 contribute to the ATP site; these read DAK, KF, and RK. Aspartate 240 provides a ligand contact to L-methionine. Lysine 271 contacts L-methionine.

This sequence belongs to the AdoMet synthase family. Homotetramer; dimer of dimers. Mg(2+) serves as cofactor. The cofactor is K(+).

The protein localises to the cytoplasm. The catalysed reaction is L-methionine + ATP + H2O = S-adenosyl-L-methionine + phosphate + diphosphate. Its pathway is amino-acid biosynthesis; S-adenosyl-L-methionine biosynthesis; S-adenosyl-L-methionine from L-methionine: step 1/1. Its function is as follows. Catalyzes the formation of S-adenosylmethionine (AdoMet) from methionine and ATP. The overall synthetic reaction is composed of two sequential steps, AdoMet formation and the subsequent tripolyphosphate hydrolysis which occurs prior to release of AdoMet from the enzyme. The chain is S-adenosylmethionine synthase from Ectopseudomonas mendocina (strain ymp) (Pseudomonas mendocina).